The primary structure comprises 343 residues: Uroporphyrinogen decarboxylase (343 aa).

Residues 23–27 (RQAGR), aspartate 73, tyrosine 150, serine 205, and histidine 322 contribute to the substrate site.

This sequence belongs to the uroporphyrinogen decarboxylase family. In terms of assembly, homodimer.

It is found in the cytoplasm. The catalysed reaction is uroporphyrinogen III + 4 H(+) = coproporphyrinogen III + 4 CO2. The protein operates within porphyrin-containing compound metabolism; protoporphyrin-IX biosynthesis; coproporphyrinogen-III from 5-aminolevulinate: step 4/4. In terms of biological role, catalyzes the decarboxylation of four acetate groups of uroporphyrinogen-III to yield coproporphyrinogen-III. The polypeptide is Uroporphyrinogen decarboxylase (Cereibacter sphaeroides (strain ATCC 17029 / ATH 2.4.9) (Rhodobacter sphaeroides)).